The sequence spans 526 residues: Rho guanine nucleotide exchange factor 3 (526 aa).

The tract at residues 20-40 (ELPPASGPAKDAEEPSNKRVK) is disordered. Phosphoserine occurs at positions 47 and 70. Residues 122–304 (KRQEAIFELS…QGIVAEINTK (183 aa)) form the DH domain. Residues 291–449 (INIIQGIVAE…WLNCIRQAKE (159 aa)) form the PH domain. Residues 464 to 526 (EGSFLNPTTG…GNSRHGESNV (63 aa)) are disordered. Residues 466-475 (SFLNPTTGSR) show a composition bias toward polar residues.

As to quaternary structure, interacts with RHOA and RHOB. Widely expressed. Highest levels are found in adult brain and skeletal muscle. Lower levels are found in heart and kidney.

The protein resides in the cytoplasm. Functionally, acts as a guanine nucleotide exchange factor (GEF) for RhoA and RhoB GTPases. The protein is Rho guanine nucleotide exchange factor 3 (ARHGEF3) of Homo sapiens (Human).